Here is an 83-residue protein sequence, read N- to C-terminus: ATP synthase subunit c (83 aa).

Transmembrane regions (helical) follow at residues 10–30 (IAVA…FGLL) and 52–72 (MFIV…IALF).

Belongs to the ATPase C chain family. F-type ATPases have 2 components, F(1) - the catalytic core - and F(0) - the membrane proton channel. F(1) has five subunits: alpha(3), beta(3), gamma(1), delta(1), epsilon(1). F(0) has three main subunits: a(1), b(2) and c(10-14). The alpha and beta chains form an alternating ring which encloses part of the gamma chain. F(1) is attached to F(0) by a central stalk formed by the gamma and epsilon chains, while a peripheral stalk is formed by the delta and b chains.

It is found in the cell inner membrane. F(1)F(0) ATP synthase produces ATP from ADP in the presence of a proton or sodium gradient. F-type ATPases consist of two structural domains, F(1) containing the extramembraneous catalytic core and F(0) containing the membrane proton channel, linked together by a central stalk and a peripheral stalk. During catalysis, ATP synthesis in the catalytic domain of F(1) is coupled via a rotary mechanism of the central stalk subunits to proton translocation. Functionally, key component of the F(0) channel; it plays a direct role in translocation across the membrane. A homomeric c-ring of between 10-14 subunits forms the central stalk rotor element with the F(1) delta and epsilon subunits. This chain is ATP synthase subunit c, found in Shewanella loihica (strain ATCC BAA-1088 / PV-4).